The following is a 143-amino-acid chain: Anti-sigma F factor (143 aa).

Belongs to the anti-sigma-factor family.

It catalyses the reaction L-seryl-[protein] + ATP = O-phospho-L-seryl-[protein] + ADP + H(+). It carries out the reaction L-threonyl-[protein] + ATP = O-phospho-L-threonyl-[protein] + ADP + H(+). Its function is as follows. Binds to sigma F and blocks its ability to form an RNA polymerase holoenzyme (E-sigma F). Phosphorylates SpoIIAA on a serine residue. This phosphorylation may enable SpoIIAA to act as an anti-anti-sigma factor that counteracts SpoIIAB and thus releases sigma F from inhibition. The chain is Anti-sigma F factor from Thermoanaerobacter pseudethanolicus (strain ATCC 33223 / 39E) (Clostridium thermohydrosulfuricum).